Here is a 316-residue protein sequence, read N- to C-terminus: ATP synthase gamma chain (316 aa).

Belongs to the ATPase gamma chain family. In terms of assembly, F-type ATPases have 2 components, CF(1) - the catalytic core - and CF(0) - the membrane proton channel. CF(1) has five subunits: alpha(3), beta(3), gamma(1), delta(1), epsilon(1). CF(0) has three main subunits: a, b and c.

It is found in the cellular thylakoid membrane. Functionally, produces ATP from ADP in the presence of a proton gradient across the membrane. The gamma chain is believed to be important in regulating ATPase activity and the flow of protons through the CF(0) complex. In Prochlorococcus marinus (strain MIT 9211), this protein is ATP synthase gamma chain.